The chain runs to 347 residues: Quinolinate synthase (347 aa).

Iminosuccinate contacts are provided by H47 and S68. C113 is a [4Fe-4S] cluster binding site. Iminosuccinate-binding positions include 139–141 (YAN) and S156. C200 is a [4Fe-4S] cluster binding site. Iminosuccinate-binding positions include 226-228 (HPE) and T243. Residue C297 coordinates [4Fe-4S] cluster.

Belongs to the quinolinate synthase family. Type 1 subfamily. It depends on [4Fe-4S] cluster as a cofactor.

It is found in the cytoplasm. The enzyme catalyses iminosuccinate + dihydroxyacetone phosphate = quinolinate + phosphate + 2 H2O + H(+). It functions in the pathway cofactor biosynthesis; NAD(+) biosynthesis; quinolinate from iminoaspartate: step 1/1. Functionally, catalyzes the condensation of iminoaspartate with dihydroxyacetone phosphate to form quinolinate. This chain is Quinolinate synthase, found in Salmonella choleraesuis (strain SC-B67).